Here is a 104-residue protein sequence, read N- to C-terminus: L-rhamnose mutarotase (104 aa).

Tyr-18 provides a ligand contact to substrate. His-22 (proton donor) is an active-site residue. Substrate is bound by residues Tyr-41 and 76–77 (WW).

Belongs to the rhamnose mutarotase family. In terms of assembly, homodimer.

The protein localises to the cytoplasm. The catalysed reaction is alpha-L-rhamnose = beta-L-rhamnose. Its pathway is carbohydrate metabolism; L-rhamnose metabolism. Involved in the anomeric conversion of L-rhamnose. The polypeptide is L-rhamnose mutarotase (Oceanobacillus iheyensis (strain DSM 14371 / CIP 107618 / JCM 11309 / KCTC 3954 / HTE831)).